The chain runs to 138 residues: Large ribosomal subunit protein uL16 (138 aa).

The span at 1 to 16 (MLIPKRVKYRRQHRPT) shows a compositional bias: basic residues. Residues 1 to 23 (MLIPKRVKYRRQHRPTRSGISKG) form a disordered region.

This sequence belongs to the universal ribosomal protein uL16 family. Part of the 50S ribosomal subunit.

Functionally, binds 23S rRNA and is also seen to make contacts with the A and possibly P site tRNAs. This Corynebacterium glutamicum (strain R) protein is Large ribosomal subunit protein uL16.